Here is a 138-residue protein sequence, read N- to C-terminus: Putative ribonuclease VapC45 (138 aa).

Functionally, toxic component of a type II toxin-antitoxin (TA) system. An RNase. The cognate antitoxin is VapB45. This is Putative ribonuclease VapC45 from Mycobacterium tuberculosis (strain ATCC 25618 / H37Rv).